We begin with the raw amino-acid sequence, 67 residues long: Large ribosomal subunit protein bL31 (67 aa).

The Zn(2+) site is built by Cys16, Cys18, Cys37, and Cys40.

The protein belongs to the bacterial ribosomal protein bL31 family. Type A subfamily. Part of the 50S ribosomal subunit. Requires Zn(2+) as cofactor.

Binds the 23S rRNA. The sequence is that of Large ribosomal subunit protein bL31 from Methylococcus capsulatus (strain ATCC 33009 / NCIMB 11132 / Bath).